Consider the following 302-residue polypeptide: NAD kinase 2 (302 aa).

Catalysis depends on Asp-78, which acts as the Proton acceptor. NAD(+) contacts are provided by residues 78-79, 152-153, Asp-182, 193-198, and Ala-217; these read DG, NE, and TAYSLS.

The protein belongs to the NAD kinase family. The cofactor is a divalent metal cation.

It localises to the cytoplasm. It carries out the reaction NAD(+) + ATP = ADP + NADP(+) + H(+). Its function is as follows. Involved in the regulation of the intracellular balance of NAD and NADP, and is a key enzyme in the biosynthesis of NADP. Catalyzes specifically the phosphorylation on 2'-hydroxyl of the adenosine moiety of NAD to yield NADP. In Prochlorococcus marinus (strain SARG / CCMP1375 / SS120), this protein is NAD kinase 2.